A 372-amino-acid chain; its full sequence is N-methyl-L-tryptophan oxidase (372 aa).

4–34 is a binding site for FAD; that stretch reads DLIIIGSGSVGAAAGYYATRAGLNVLMTDAH. Cys308 carries the post-translational modification S-8alpha-FAD cysteine.

The protein belongs to the MSOX/MTOX family. MTOX subfamily. Monomer. FAD is required as a cofactor.

The enzyme catalyses N(alpha)-methyl-L-tryptophan + O2 + H2O = L-tryptophan + formaldehyde + H2O2. Its function is as follows. Catalyzes the oxidative demethylation of N-methyl-L-tryptophan. The sequence is that of N-methyl-L-tryptophan oxidase from Escherichia coli (strain K12 / DH10B).